A 62-amino-acid chain; its full sequence is MKFFGILLIVTMVVLVMIATTYVESISIGIKCSPSIDLCEGQCRIRKYFTGYCSGDTCHCSG.

A signal peptide spans 1–25 (MKFFGILLIVTMVVLVMIATTYVES). Intrachain disulfides connect C32-C53, C39-C58, and C43-C60.

Expressed by the venom gland.

The protein resides in the secreted. Functionally, neurotoxin. Decreases the action potential of myelinated nerves in mice and frogs. This is Venom protein 51.1 from Lychas mucronatus (Chinese swimming scorpion).